The chain runs to 133 residues: Nickel-responsive regulator (133 aa).

Ni(2+) is bound by residues His76, His87, His89, and Cys95.

Belongs to the transcriptional regulatory CopG/NikR family. Homotetramer. The cofactor is Ni(2+).

Functionally, transcriptional repressor of the nikABCDE operon. Is active in the presence of excessive concentrations of intracellular nickel. The protein is Nickel-responsive regulator of Salmonella paratyphi A (strain ATCC 9150 / SARB42).